The sequence spans 513 residues: MQQLNPSEISEIIKARIDNLSVTTEAQNEGTVVSVTDGIIRIHGLAEVMYGEMIEFEGGVYGIALNLERDSVGAVILGDYQGVAEGQTCKCTGRILEVPVGPELQGRVVDALGNPIDGKGPIDAKATDAIEKIAPGVIARQSVDQPVQIGLKAVDTMVPIGRGQRELIIGDRQTGKTAIAVDAIINQKGTGIKCIYVAIGQKASSIASVVRKLEEHGAMDHTIVVAATASDPASMQFLAPFAGCTMGEYYRDRGEDCLIIYDDLTKQAWAYRQISLLLRRPPGREAYPGDVFYLHSRLLERAARVNAAHVEKYTNGEVKGQTGSLTALPIIETQAGDVSAFVPTNVISITDGQIFLESDLFNAGIRPAMNAGISVSRVGGSAQTKVIKKLSGGIRTALAQYRELAAFAQFASDLDEATKAQLNHGQRVTELMKQKQYSPQSVAEMAVVVYAANEGFLEDVEVAKMGAFESSLLSYMNSSHAELMAEMNTGAYSDDIAGKLKGALENFKATQTW.

170 to 177 (GDRQTGKT) is an ATP binding site.

This sequence belongs to the ATPase alpha/beta chains family. F-type ATPases have 2 components, CF(1) - the catalytic core - and CF(0) - the membrane proton channel. CF(1) has five subunits: alpha(3), beta(3), gamma(1), delta(1), epsilon(1). CF(0) has three main subunits: a(1), b(2) and c(9-12). The alpha and beta chains form an alternating ring which encloses part of the gamma chain. CF(1) is attached to CF(0) by a central stalk formed by the gamma and epsilon chains, while a peripheral stalk is formed by the delta and b chains.

The protein localises to the cell inner membrane. It catalyses the reaction ATP + H2O + 4 H(+)(in) = ADP + phosphate + 5 H(+)(out). Functionally, produces ATP from ADP in the presence of a proton gradient across the membrane. The alpha chain is a regulatory subunit. This chain is ATP synthase subunit alpha, found in Teredinibacter turnerae (strain ATCC 39867 / T7901).